An 867-amino-acid polypeptide reads, in one-letter code: Transcription factor E2F8 (867 aa).

The tract at residues 38–58 (DFGPLTTPTKPKEGSQGEPWT) is disordered. Ser71 and Ser102 each carry phosphoserine. 2 DNA-binding regions span residues 113–182 (RKEK…TWHG) and 261–347 (RKDK…KWTG). Disordered stretches follow at residues 408–432 (RRKI…NSAP), 532–616 (QSVT…SGSK), and 771–800 (APEN…GQSV). A phosphoserine mark is found at Ser413 and Ser417. Polar residues-rich tracts occupy residues 413–432 (SAPS…NSAP) and 532–556 (QSVT…TGSK). Over residues 557–567 (DSTDATTEKAA) the composition is skewed to basic and acidic residues. Over residues 568–579 (NDTSKASASTRP) the composition is skewed to polar residues. Over residues 594 to 604 (RTREPAGERGS) the composition is skewed to basic and acidic residues. Over residues 775-800 (AGTQQGRATNYDSPVPGQSQPNGQSV) the composition is skewed to polar residues.

Belongs to the E2F/DP family. In terms of assembly, homodimer and heterodimer: mainly forms homodimers and, to a lesser extent, heterodimers with E2F8. Dimerization is important for DNA-binding. Interacts with HIF1A.

It is found in the nucleus. Functionally, atypical E2F transcription factor that participates in various processes such as angiogenesis and polyploidization of specialized cells. Mainly acts as a transcription repressor that binds DNA independently of DP proteins and specifically recognizes the E2 recognition site 5'-TTTC[CG]CGC-3'. Directly represses transcription of classical E2F transcription factors such as E2F1: component of a feedback loop in S phase by repressing the expression of E2F1, thereby preventing p53/TP53-dependent apoptosis. Plays a key role in polyploidization of cells in placenta and liver by regulating the endocycle, probably by repressing genes promoting cytokinesis and antagonizing action of classical E2F proteins (E2F1, E2F2 and/or E2F3). Required for placental development by promoting polyploidization of trophoblast giant cells. Acts as a promoter of sprouting angiogenesis, possibly by acting as a transcription activator: associates with HIF1A, recognizes and binds the VEGFA promoter, which is different from canonical E2 recognition site, and activates expression of the VEGFA gene. The chain is Transcription factor E2F8 (E2F8) from Homo sapiens (Human).